Here is a 685-residue protein sequence, read N- to C-terminus: Protein SPT2 homolog (685 aa).

An important for interaction with DNA region spans residues 1 to 570 (MDFREILMIA…PPLSGYRAAQ (570 aa)). Lysine 37 is covalently cross-linked (Glycyl lysine isopeptide (Lys-Gly) (interchain with G-Cter in SUMO2)). Residues 45-81 (QAFLKRKEEELRRKALEEKRRKEELVKKRIELKHDKK) are a coiled coil. The disordered stretch occupies residues 79-168 (DKKARAMAKR…PLKSAPPPMN (90 aa)). A compositionally biased stretch (basic and acidic residues) spans 101–111 (IEEKSKKRQAT). Residues 123-148 (YEMEEENEFLEYNHAESEQEYEEEQE) adopt a coiled-coil conformation. Lysine 187 participates in a covalent cross-link: Glycyl lysine isopeptide (Lys-Gly) (interchain with G-Cter in SUMO2). 2 stretches are compositionally biased toward basic and acidic residues: residues 188-209 (VVKK…EFLE) and 260-275 (HAEK…EKHL). Disordered stretches follow at residues 188–615 (VVKK…QEEI) and 644–685 (SWKE…LKRR). Position 278 is a phosphoserine (serine 278). Low complexity-rich tracts occupy residues 317–330 (SSTS…TSAS), 365–385 (SPGV…PSTG), and 402–415 (GSSS…ISGS). A compositionally biased stretch (polar residues) spans 416-431 (KKPTNDSNPSRRTVSG). A compositionally biased stretch (low complexity) spans 435–501 (PGQPASSSGG…PGRSISGSIP (67 aa)). Serine 471 carries the post-translational modification Phosphoserine. Residues 519–529 (GPGQTVSSSGP) show a composition bias toward polar residues. Residues 542-553 (ISSKNIISRSSN) are compositionally biased toward low complexity. Residues 571–685 (GPQRLPFPTG…RRRAKKLKRR (115 aa)) are important for interaction with histones. Position 582 is an N6-acetyllysine (lysine 582). A compositionally biased stretch (acidic residues) spans 587 to 613 (YEEEDDDDDEYDSEMEDFIEDEGEPQE). Serine 599 carries the phosphoserine modification. 2 stretches are compositionally biased toward basic and acidic residues: residues 644 to 655 (SWKEQQKEEAKS) and 666 to 676 (EMRREEEEMQR). Residues 645 to 685 (WKEQQKEEAKSLRLGMQEDLEEMRREEEEMQRRRAKKLKRR) are a coiled coil.

Belongs to the SPT2 family. In terms of assembly, interacts with histones. Interacts with a heterotetrameric complex formed by histone H3 and H4, especially when the histone tetramer is not bound to DNA. Interacts with histone H3.3.

It localises to the nucleus. The protein localises to the nucleolus. Its function is as follows. Histone chaperone that stabilizes pre-existing histone tetramers and regulates replication-independent histone exchange on chromatin. Required for normal chromatin refolding in the coding region of transcribed genes, and for the suppression of spurious transcription. Binds DNA and histones and promotes nucleosome assembly (in vitro). Facilitates formation of tetrameric histone complexes containing histone H3 and H4. Modulates RNA polymerase 1-mediated transcription. Binds DNA, with a preference for branched DNA species, such as Y-form DNA and Holliday junction DNA. This Homo sapiens (Human) protein is Protein SPT2 homolog (SPTY2D1).